A 133-amino-acid chain; its full sequence is Agouti-signaling protein (133 aa).

Positions 1–22 (MDVSRLLLATLLVCLCFLTAYS) are cleaved as a signal peptide. Asn39 carries an N-linked (GlcNAc...) asparagine glycan. The interval 56–95 (NKKSKKISRNEAEKKKRPSKRKAPMKNVARTRPPPPTPCV) is disordered. Over residues 70–79 (KKRPSKRKAP) the composition is skewed to basic residues. Cystine bridges form between Cys94/Cys109, Cys101/Cys115, Cys108/Cys126, Cys112/Cys133, and Cys117/Cys124. The region spanning 94–133 (CVATRDSCKPPAPACCDPCAFCQCRFFRSACSCRVLNPTC) is the Agouti domain.

It localises to the secreted. Involved in the regulation of melanogenesis. The binding of ASP to MC1R precludes alpha-MSH initiated signaling and thus blocks production of cAMP, leading to a down-regulation of eumelanogenesis (brown/black pigment) and thus increasing synthesis of pheomelanin (yellow/red pigment). The sequence is that of Agouti-signaling protein (ASIP) from Bos taurus (Bovine).